The primary structure comprises 579 residues: Rop guanine nucleotide exchange factor 6 (579 aa).

The span at 31 to 61 shows a compositional bias: low complexity; that stretch reads ESTTDSSLSSSSSGVGSSSGRSSVAERSVSS. The segment at 31-89 is disordered; that stretch reads ESTTDSSLSSSSSGVGSSSGRSSVAERSVSSPPTKSQILGWPLGQGSWRKSSGKMKKKT. Positions 98-479 constitute a PRONE domain; sequence FKRVGTETSE…DISKDDGDGD (382 aa).

Functionally, guanine-nucleotide exchange factor (GEF) that acts as an activator of Rop (Rho of plants) GTPases by promoting the exchange of GDP for GTP. The sequence is that of Rop guanine nucleotide exchange factor 6 (ROPGEF6) from Arabidopsis thaliana (Mouse-ear cress).